A 75-amino-acid chain; its full sequence is Protease B inhibitor 2 (75 aa).

Phosphothreonine is present on Thr-74.

The protein belongs to the protease inhibitor I9 family. Part of the heterodimeric LMA1 complex together with the thioredoxin II/TRX2. LMA1 binds to the ATPase SEC18.

It localises to the cytoplasm. Functionally, cytosolic inhibitor of vacuolar proteinase B (yscB), probably regulating protease B activity during limited proteolysis. PBI2 is a component of the LMA1 complex, which is involved in the facilitation of vesicle fusion such as homotypic vacuole and ER-derived COPII vesicle fusion with the Golgi. The protein is Protease B inhibitor 2 (PBI2) of Saccharomyces cerevisiae (strain ATCC 204508 / S288c) (Baker's yeast).